A 1196-amino-acid chain; its full sequence is Major DNA-binding protein (1196 aa).

The segment at 499-512 is a zinc-finger region; that stretch reads CNLCTFDTRHACVH. 2 consecutive short sequence motifs (required for filament formation) follow at residues 843-844 and 1142-1144; these read FW and FNF. A disordered region spans residues 1158–1196; that stretch reads GGPGAPGPAFAGRKRAFHGDDPFGEGPPDKKGDLTLDML. Residues 1170-1196 form a required for nuclear localization region; sequence RKRAFHGDDPFGEGPPDKKGDLTLDML. Over residues 1174–1196 the composition is skewed to basic and acidic residues; that stretch reads FHGDDPFGEGPPDKKGDLTLDML.

This sequence belongs to the herpesviridae major DNA-binding protein family. Homooligomers. Forms double-helical filaments necessary for the formation of replication compartments within the host nucleus. Interacts with the origin-binding protein. Interacts with the helicase primase complex; this interaction stimulates primer synthesis activity of the helicase-primase complex. Interacts with the DNA polymerase. Interacts with the alkaline exonuclease; this interaction increases its nuclease processivity. Interacts with ICP27; this interaction plays a role in the stimulation of late gene transcription.

The protein localises to the host nucleus. Functionally, plays several crucial roles in viral infection. Participates in the opening of the viral DNA origin to initiate replication by interacting with the origin-binding protein. May disrupt loops, hairpins and other secondary structures present on ssDNA to reduce and eliminate pausing of viral DNA polymerase at specific sites during elongation. Promotes viral DNA recombination by performing strand-transfer, characterized by the ability to transfer a DNA strand from a linear duplex to a complementary single-stranded DNA circle. Can also catalyze the renaturation of complementary single strands. Additionally, reorganizes the host cell nucleus, leading to the formation of prereplicative sites and replication compartments. This process is driven by the protein which can form double-helical filaments in the absence of DNA. The protein is Major DNA-binding protein of Homo sapiens (Human).